The sequence spans 164 residues: Superoxide dismutase [Cu-Zn] 3 (164 aa).

The Cu cation site is built by H51, H53, and H68. A disulfide bridge links C62 with C151. Positions 68, 76, 85, and 88 each coordinate Zn(2+). H125 serves as a coordination point for Cu cation. A Peroxisome localization signal motif is present at residues A162 to L164.

It belongs to the Cu-Zn superoxide dismutase family. In terms of assembly, homodimer. Cu cation is required as a cofactor. Zn(2+) serves as cofactor. In terms of tissue distribution, expressed in leaves (at protein level).

The protein resides in the peroxisome. It catalyses the reaction 2 superoxide + 2 H(+) = H2O2 + O2. Its function is as follows. Destroys radicals which are normally produced within the cells and which are toxic to biological systems. In Arabidopsis thaliana (Mouse-ear cress), this protein is Superoxide dismutase [Cu-Zn] 3 (CSD3).